We begin with the raw amino-acid sequence, 393 residues long: Phosphoglycerate kinase (393 aa).

Residues 21–23 (DFN), R36, 59–62 (HLGR), R118, and R151 each bind substrate. Residues K201, E323, and 349–352 (GGDS) contribute to the ATP site.

The protein belongs to the phosphoglycerate kinase family. In terms of assembly, monomer.

The protein resides in the cytoplasm. It catalyses the reaction (2R)-3-phosphoglycerate + ATP = (2R)-3-phospho-glyceroyl phosphate + ADP. The protein operates within carbohydrate degradation; glycolysis; pyruvate from D-glyceraldehyde 3-phosphate: step 2/5. This Moorella thermoacetica (strain ATCC 39073 / JCM 9320) protein is Phosphoglycerate kinase.